Consider the following 483-residue polypeptide: Glutamate--tRNA ligase (483 aa).

Residues 11–21 (PSPTGLLHIGN) carry the 'HIGH' region motif. The 'KMSKS' region signature appears at 255 to 259 (KLSKR). Lys258 provides a ligand contact to ATP.

It belongs to the class-I aminoacyl-tRNA synthetase family. Glutamate--tRNA ligase type 1 subfamily. In terms of assembly, monomer.

The protein localises to the cytoplasm. It carries out the reaction tRNA(Glu) + L-glutamate + ATP = L-glutamyl-tRNA(Glu) + AMP + diphosphate. Functionally, catalyzes the attachment of glutamate to tRNA(Glu) in a two-step reaction: glutamate is first activated by ATP to form Glu-AMP and then transferred to the acceptor end of tRNA(Glu). The protein is Glutamate--tRNA ligase of Lactococcus lactis subsp. lactis (strain IL1403) (Streptococcus lactis).